A 403-amino-acid polypeptide reads, in one-letter code: MGKVWKQQMYPQYATYYYPQYLQAKQSLVPAHPMAPPSPSTTSSNNNSSSSSNSGWDQLSKTNLYIRGLPPNTTDQDLVKLCQPYGKIVSTKAILDKATNKCKGYGFVDFDSPAAAQKAVSALKANGVQAQMAKQQEQDPTNLYISNLPLSMDEQELENMLKPFGQVISTRVLRDSSGASRGVGFARMESTEKCEAVIGHFNGKFIKTPPGVSAPTEPLLCKFADGGQKKRQNPNKYIPNGRPWPRDGEAGMTLTYDPTTAALHNGFYPSPYSIATNRMITQTSLTPYIASPVSAYQVQSPSWMQPQPYILQHPGAVLTPSMEHTMSLQPASMISPLAQQMSHLSLGSTGTYMPATSAMQGAYLPQYTHMQTAAVPVEEASGQQQVAVETSNDHSPYTFPPNK.

Positions 30–56 (PAHPMAPPSPSTTSSNNNSSSSSNSGW) are disordered. The span at 40-54 (STTSSNNNSSSSSNS) shows a compositional bias: low complexity. RRM domains lie at 62 to 135 (TNLY…MAKQ) and 141 to 226 (TNLY…FADG). Thr208 bears the Phosphothreonine mark. Residues 382 to 395 (GQQQVAVETSNDHS) are compositionally biased toward polar residues. Positions 382–403 (GQQQVAVETSNDHSPYTFPPNK) are disordered.

Ubiquitous. Expressed in all tissues except testis.

The protein resides in the nucleus. Single-stranded DNA binding protein that interacts with the region upstream of the MYC gene. Binds specifically to the DNA sequence motif 5'-[AT]CT[AT][AT]T-3'. Probably has a role in DNA replication. This Mus musculus (Mouse) protein is RNA-binding motif, single-stranded-interacting protein 1 (Rbms1).